The sequence spans 198 residues: Recombination protein RecR (198 aa).

The segment at 57–72 (CSTCQTLTDQDPCAIC) adopts a C4-type zinc-finger fold. The Toprim domain maps to 80–175 (RMICVVEGVP…KVTRIAQGVP (96 aa)).

This sequence belongs to the RecR family.

Its function is as follows. May play a role in DNA repair. It seems to be involved in an RecBC-independent recombinational process of DNA repair. It may act with RecF and RecO. The sequence is that of Recombination protein RecR from Anaeromyxobacter dehalogenans (strain 2CP-C).